The primary structure comprises 122 residues: Cytochrome c-556 (122 aa).

Residues methionine 11, cysteine 111, cysteine 114, and histidine 115 each contribute to the heme site. Residues methionine 11, cysteine 111, cysteine 114, and histidine 115 each contribute to the heme c site.

Monomer. Post-translationally, binds 1 heme c group covalently per subunit.

Its function is as follows. Low-spin monoheme cytochrome c. This is Cytochrome c-556 from Agrobacterium tumefaciens (strain II Chrys).